A 278-amino-acid polypeptide reads, in one-letter code: Glutamate racemase (278 aa).

Substrate is bound by residues 25–26 (DS) and 57–58 (YG). Catalysis depends on Cys-89, which acts as the Proton donor/acceptor. Residue 90–91 (NT) coordinates substrate. Residue Cys-204 is the Proton donor/acceptor of the active site. Substrate is bound at residue 205–206 (TH).

This sequence belongs to the aspartate/glutamate racemases family.

It carries out the reaction L-glutamate = D-glutamate. The protein operates within cell wall biogenesis; peptidoglycan biosynthesis. Provides the (R)-glutamate required for cell wall biosynthesis. The protein is Glutamate racemase of Brucella anthropi (strain ATCC 49188 / DSM 6882 / CCUG 24695 / JCM 21032 / LMG 3331 / NBRC 15819 / NCTC 12168 / Alc 37) (Ochrobactrum anthropi).